The sequence spans 370 residues: Tyrosine-protein kinase transforming protein SEA (370 aa).

One can recognise a Protein kinase domain in the interval 60–323 (THRSRVIGRG…GLVCELERVL (264 aa)). Residues 66–74 (IGRGHFGSV) and Lys92 each bind ATP. The active-site Proton acceptor is Asp186. Tyr216 carries the phosphotyrosine; by autocatalysis modification. The segment at 345 to 370 (PPFPPAPRGQLPDSEDEEDEEEEVAE) is disordered. The span at 357–370 (DSEDEEDEEEEVAE) shows a compositional bias: acidic residues.

The protein belongs to the protein kinase superfamily. Tyr protein kinase family.

The catalysed reaction is L-tyrosyl-[protein] + ATP = O-phospho-L-tyrosyl-[protein] + ADP + H(+). This chain is Tyrosine-protein kinase transforming protein SEA (V-SEA), found in Galliformes.